We begin with the raw amino-acid sequence, 250 residues long: Aquaporin TIP1-1 (250 aa).

Helical transmembrane passes span 24 to 44 (FAEF…GMAF) and 56 to 76 (AGLI…VSVG). Positions 85–87 (NPA) match the NPA 1 motif. Helical transmembrane passes span 104 to 126 (LLYW…FSTG), 143 to 163 (ALVL…ATAV), and 172 to 192 (TIAP…GGAF). An NPA 2 motif is present at residues 198–200 (NPA). The helical transmembrane segment at 218 to 238 (YWVGPLIGGGLAGVIYELLFI) threads the bilayer.

This sequence belongs to the MIP/aquaporin (TC 1.A.8) family. TIP (TC 1.A.8.10) subfamily. Expressed in roots, shoots, leaves, tassels, ears and embryos. Expressed in meristems and zones of cell enlargement: tips of primary and lateral roots, leaf primordia, and male and female inflorescence meristems. Highly expressed in the root epidermis and endodermis, parenchyma cells surrounding mature xylem vessels in the root and the stem, phloem companion cells and a ring of cells around the phloem strand in the stem and the leaf sheath, and the basal endosperm transfer cells in developing kernels.

It is found in the vacuole membrane. Water channel required to facilitate the transport of water across cell membrane. May support the rapid influx of water into vacuoles during cell expansion, permit osmotic equilibration between the cytosol and the vacuolar content and rapid transcellular water flow through living cells. Its function is impaired by Hg(2+). This is Aquaporin TIP1-1 (TIP1-1) from Zea mays (Maize).